The primary structure comprises 44 residues: uncharacterized protein (44 aa).

The helical transmembrane segment at 19-39 (AVGFVVSFGFFAFLFVMATVI) threads the bilayer.

Its subcellular location is the cell membrane. This is an uncharacterized protein from Bacillus subtilis (strain 168).